A 1255-amino-acid polypeptide reads, in one-letter code: Kinesin-related protein 7 (1255 aa).

A disordered region spans residues 1–26 (MESPVVEGNSGEVATPTLPQPPTPVS). The Kinesin motor domain maps to 28–349 (NIRVVCRVRP…LQFGTRAKTI (322 aa)). 107–114 (GQTASGKT) serves as a coordination point for ATP. 3 stretches are compositionally biased toward low complexity: residues 454–491 (NNNNVDENNNTNNNDNNNNDNNNNNQYQEESNQYQQEN), 545–563 (NNNNVDDNNNGEINNDSDG), and 583–603 (HNINNNNNNNNNINNDNNSNS). 6 disordered regions span residues 454 to 503 (NNNN…NSSF), 530 to 564 (GNISDDDDDDDDHHSNNNNVDDNNNGEINNDSDGY), 579 to 628 (DLND…MDVN), 661 to 686 (ENEQQQQQQQHNDDDEDIKSTTSNAT), 795 to 864 (EEGS…TKSI), and 915 to 934 (ISIKSNKEPSPSSSTTTSIK). Over residues 608–628 (VSTSYITSSPNLSPSKSMDVN) the composition is skewed to polar residues. Over residues 813-834 (GDDDDEENEDNENEDVIVDSDE) the composition is skewed to acidic residues. A compositionally biased stretch (low complexity) spans 915–932 (ISIKSNKEPSPSSSTTTS). A helical transmembrane segment spans residues 945–965 (IIFTIILTITLVSSSLLCLYL). A coiled-coil region spans residues 1088-1223 (NYITKIDQLS…QELEDAPIAL (136 aa)).

Belongs to the TRAFAC class myosin-kinesin ATPase superfamily. Kinesin family.

The protein resides in the nucleus membrane. Its subcellular location is the cytoplasm. The protein localises to the cytoskeleton. Its function is as follows. Microtubule-associated force-producing protein that plays a role in organelle transport. Its motor activity is directed toward the microtubule's plus end. May be involved in cell motility or cell differentiation during prestalk formation. This Dictyostelium discoideum (Social amoeba) protein is Kinesin-related protein 7 (kif7).